Here is a 307-residue protein sequence, read N- to C-terminus: Thioredoxin-related transmembrane protein 2-B (307 aa).

Residues 1–19 (MALLTPLFAFLYHLPQVYK) form the signal peptide. Residues 20-111 (WLLKPYYIAS…VILFFRLDIR (92 aa)) are Extracellular-facing. The chain crosses the membrane as a helical span at residues 112–132 (LGLLYLTLCIVFLMTCKPPLY). In terms of domain architecture, Thioredoxin spans 132-269 (YMGPEYIKYF…LYQKSKKLGK (138 aa)). Over 133–307 (MGPEYIKYFS…AMDTESKKDK (175 aa)) the chain is Cytoplasmic. A disordered region spans residues 268-307 (GKTKEKLERPSELVFSTVPEEEEPEAETISAMDTESKKDK). Residues 269–278 (KTKEKLERPS) show a composition bias toward basic and acidic residues. The Di-lysine motif signature appears at 304-307 (KKDK).

Monomer. Homodimer; disulfide-linked. Occurs in both reduced and oxidized monomeric form. Oxidative conditions increase homodimerization.

It is found in the endoplasmic reticulum membrane. The protein localises to the mitochondrion membrane. In terms of biological role, endoplasmic reticulum and mitochondria-associated protein that probably functions as a regulator of cellular redox state and thereby regulates protein post-translational modification, protein folding and mitochondrial activity. This Danio rerio (Zebrafish) protein is Thioredoxin-related transmembrane protein 2-B (tmx2b).